Reading from the N-terminus, the 225-residue chain is Cytidylate kinase (225 aa).

ATP is bound at residue 10–18 (GPASSGKST).

Belongs to the cytidylate kinase family. Type 1 subfamily.

It is found in the cytoplasm. The enzyme catalyses CMP + ATP = CDP + ADP. It carries out the reaction dCMP + ATP = dCDP + ADP. This Streptococcus suis (strain 98HAH33) protein is Cytidylate kinase.